Here is a 316-residue protein sequence, read N- to C-terminus: Acetaldehyde dehydrogenase (316 aa).

Residue 13–16 (SGNI) participates in NAD(+) binding. C131 acts as the Acyl-thioester intermediate in catalysis. NAD(+) is bound by residues 162–170 (SAGPGTRAN) and N290.

It belongs to the acetaldehyde dehydrogenase family.

It carries out the reaction acetaldehyde + NAD(+) + CoA = acetyl-CoA + NADH + H(+). Catalyzes the conversion of acetaldehyde to acetyl-CoA, using NAD(+) and coenzyme A. Is the final enzyme in the meta-cleavage pathway for the degradation of 2-aminophenol. In Pseudomonas sp, this protein is Acetaldehyde dehydrogenase (amnH).